The following is a 194-amino-acid chain: Probable GTP-binding protein EngB (194 aa).

The EngB-type G domain maps to 22–194; sequence DLPEYALAGR…AWQFIKEGME (173 aa). Residues 30 to 37, 57 to 61, 75 to 78, 142 to 145, and 174 to 176 contribute to the GTP site; these read GRSNVGKS, GKTQT, DVPG, TKAD, and FSS. Residues serine 37 and threonine 59 each coordinate Mg(2+).

It belongs to the TRAFAC class TrmE-Era-EngA-EngB-Septin-like GTPase superfamily. EngB GTPase family. The cofactor is Mg(2+).

Its function is as follows. Necessary for normal cell division and for the maintenance of normal septation. The polypeptide is Probable GTP-binding protein EngB (Listeria welshimeri serovar 6b (strain ATCC 35897 / DSM 20650 / CCUG 15529 / CIP 8149 / NCTC 11857 / SLCC 5334 / V8)).